Here is a 135-residue protein sequence, read N- to C-terminus: Holo-[acyl-carrier-protein] synthase (135 aa).

Positions 7 and 57 each coordinate Mg(2+).

Belongs to the P-Pant transferase superfamily. AcpS family. The cofactor is Mg(2+).

It is found in the cytoplasm. It catalyses the reaction apo-[ACP] + CoA = holo-[ACP] + adenosine 3',5'-bisphosphate + H(+). Its function is as follows. Transfers the 4'-phosphopantetheine moiety from coenzyme A to a Ser of acyl-carrier-protein. The polypeptide is Holo-[acyl-carrier-protein] synthase (Corynebacterium glutamicum (strain R)).